The primary structure comprises 144 residues: Large ribosomal subunit protein uL15 (144 aa).

The segment at 1–52 is disordered; it reads MRLNTLSPANGARHSRKRLGRGIGSGFGKTSGRGHKGQKSRSGSSIRRGFEG. Gly residues predominate over residues 21–31; sequence RGIGSGFGKTS.

It belongs to the universal ribosomal protein uL15 family. Part of the 50S ribosomal subunit.

Binds to the 23S rRNA. The protein is Large ribosomal subunit protein uL15 of Buchnera aphidicola subsp. Acyrthosiphon pisum (strain 5A).